The sequence spans 100 residues: C-X-C motif chemokine 2 (100 aa).

A signal peptide spans 1–31 (MAPPTRQLLNAVLVLLLLLATNHQGTGVVVA). Cystine bridges form between C36–C62 and C38–C78.

It belongs to the intercrine alpha (chemokine CxC) family. As to quaternary structure, homotetramer. As to expression, at least expressed in the lung and trachea.

Its subcellular location is the secreted. Functionally, chemotactic for human polymorphonuclear leukocytes but does not induce chemokinesis or an oxidative burst. Contributes to neutrophil activation during inflammation. This Rattus norvegicus (Rat) protein is C-X-C motif chemokine 2 (Cxcl2).